Reading from the N-terminus, the 611-residue chain is Protein halfway (611 aa).

The first 22 residues, M1 to A22, serve as a signal peptide directing secretion. Disordered regions lie at residues D31 to D64, S90 to E132, and G154 to R185. Positions A43 to A59 are enriched in basic residues. The segment covering S90 to G101 has biased composition (polar residues). Low complexity predominate over residues S102 to P123. The span at S159 to Q183 shows a compositional bias: polar residues. 4 N-linked (GlcNAc...) asparagine glycosylation sites follow: N221, N246, N264, and N269. LRR repeat units lie at residues S236–L257, A259–D280, H283–K304, and N313–N334. Residues E361 to D416 enclose the LRRNT domain. 3 LRR repeats span residues N417–N438, N443–K464, and T468–N489. An LRRCT domain is found at N505 to S554.

In terms of biological role, has a role in the ecdysone induced cascade; probably indirect control of 'late' ecdysone genes. The protein is Protein halfway of Drosophila melanogaster (Fruit fly).